A 202-amino-acid polypeptide reads, in one-letter code: Securin (202 aa).

Residues 1–92 (MATLIYVDKE…QKQPSFSAKK (92 aa)) form a disordered region. Ala-2 carries the N-acetylalanine modification. Residues 61-64 (RKAL) carry the D-box motif. Short sequence motifs (TEK-box) lie at residues 71 to 73 (TEK) and 94 to 96 (TEK). Residues 163–173 (XPSPVKMPSPP) carry the SH3-binding motif. Ser-165 carries the phosphoserine; by CDK1 modification.

The protein belongs to the securin family. As to quaternary structure, interacts with RPS10 and DNAJA1. Interacts with the caspase-like ESPL1, and prevents its protease activity probably by covering its active site. Interacts with TP53 and blocks its activity probably by blocking its binding to DNA. Interacts with the Ku 70 kDa subunit of ds-DNA kinase. Interacts with PTTG1IP. In terms of processing, phosphorylated at Ser-165 by CDK1 during mitosis. Phosphorylated in vitro by ds-DNA kinase. Post-translationally, ubiquitinated through 'Lys-11' linkage of ubiquitin moieties by the anaphase promoting complex (APC) at the onset of anaphase, conducting to its degradation. 'Lys-11'-linked ubiquitination is mediated by the E2 ligase UBE2C/UBCH10.

Its subcellular location is the cytoplasm. The protein localises to the nucleus. Regulatory protein, which plays a central role in chromosome stability, in the p53/TP53 pathway, and DNA repair. Probably acts by blocking the action of key proteins. During the mitosis, it blocks Separase/ESPL1 function, preventing the proteolysis of the cohesin complex and the subsequent segregation of the chromosomes. At the onset of anaphase, it is ubiquitinated, conducting to its destruction and to the liberation of ESPL1. Its function is however not limited to a blocking activity, since it is required to activate ESPL1. Negatively regulates the transcriptional activity and related apoptosis activity of TP53. The negative regulation of TP53 may explain the strong transforming capability of the protein when it is overexpressed. May also play a role in DNA repair via its interaction with Ku, possibly by connecting DNA damage-response pathways with sister chromatid separation. This chain is Securin (PTTG1), found in Pan troglodytes (Chimpanzee).